Consider the following 1078-residue polypeptide: Zinc finger protein 827 (1078 aa).

Basic and acidic residues predominate over residues 1 to 10; it reads MPRRKQEQPK. A mediates direct interaction with RBBP4 region spans residues 1–14; it reads MPRRKQEQPKRLPS. Residues 1 to 76 are disordered; that stretch reads MPRRKQEQPK…PDTSLGSATP (76 aa). An RRK motif; mediates NuRD recruitment to telomeres motif is present at residues 3–5; sequence RRK. 2 stretches are compositionally biased toward polar residues: residues 33-42 and 62-76; these read YGNSSETPSE and EQSTSPDTSLGSATP. Glycyl lysine isopeptide (Lys-Gly) (interchain with G-Cter in SUMO2) cross-links involve residues lysine 175, lysine 215, and lysine 225. Positions 307–341 are disordered; the sequence is SLLPDDPLPLPSSEKKPEKVTPPPPPPPPTAQPPQ. Pro residues predominate over residues 326–338; the sequence is VTPPPPPPPPTAQ. Glycyl lysine isopeptide (Lys-Gly) (interchain with G-Cter in SUMO2) cross-links involve residues lysine 357 and lysine 369. 3 C2H2-type zinc fingers span residues 371–393, 399–421, and 430–452; these read FQCPICGLVIKRKSYWKRHMVIH, HQCPLCPFRCARKDNLKSHMKVH, and FQCQLCPFTSSRHFSLKLHMRCH. Glycyl lysine isopeptide (Lys-Gly) (interchain with G-Cter in SUMO2) cross-links involve residues lysine 463, lysine 472, lysine 520, lysine 546, lysine 577, lysine 584, and lysine 594. Residues 466-490 are disordered; it reads IPDPDVKGSPHLSDSGCLGQQREGG. The interval 594–640 is disordered; that stretch reads KEEPKEEESLSMPLPRSSYVFSPEPEVSTPSVSEDPLTPQEGKGSVL. The segment covering 613–627 has biased composition (low complexity); that stretch reads VFSPEPEVSTPSVSE. Residues lysine 636 and lysine 655 each participate in a glycyl lysine isopeptide (Lys-Gly) (interchain with G-Cter in SUMO2) cross-link. A Glycyl lysine isopeptide (Lys-Gly) (interchain with G-Cter in SUMO1); alternate cross-link involves residue lysine 670. A Glycyl lysine isopeptide (Lys-Gly) (interchain with G-Cter in SUMO2); alternate cross-link involves residue lysine 670. Glycyl lysine isopeptide (Lys-Gly) (interchain with G-Cter in SUMO2) cross-links involve residues lysine 701, lysine 707, lysine 739, lysine 775, and lysine 795. 2 C2H2-type zinc fingers span residues 814-836 and 842-864; these read FPCDVCGKVFGRQQTLSRHLSLH and YKCHLCPYAAKCRANLNQHLTVH. Residues lysine 867 and lysine 888 each participate in a glycyl lysine isopeptide (Lys-Gly) (interchain with G-Cter in SUMO2) cross-link. 2 consecutive C2H2-type zinc fingers follow at residues 894-916 and 926-949; these read YSCHVCGFETELNVQFVSHMSLH and ICCTACDFVTMEEAEIKTHIGTKH. Basic and acidic residues predominate over residues 945-957; it reads IGTKHTGDDRKTP. The segment at 945-990 is disordered; it reads IGTKHTGDDRKTPSESNSPSSSSLSTLSDSANGKDDSDSSQKNKGG. Lysine 955 participates in a covalent cross-link: Glycyl lysine isopeptide (Lys-Gly) (interchain with G-Cter in SUMO2). Low complexity predominate over residues 958 to 974; that stretch reads SESNSPSSSSLSTLSDS. Over residues 976–985 the composition is skewed to basic and acidic residues; that stretch reads NGKDDSDSSQ. Lysine 1011 is covalently cross-linked (Glycyl lysine isopeptide (Lys-Gly) (interchain with G-Cter in SUMO2)). C2H2-type zinc fingers lie at residues 1016–1038 and 1044–1066; these read FECVFCNFVCKTKNMFERHLQIH and FECDVCHKFMKTPEQLLEHKKCH.

Belongs to the krueppel C2H2-type zinc-finger protein family. As to quaternary structure, part of a transcription inhibitory ribonucleoprotein complex composed at least of the circular RNA circZNF827, HNRNPK and HNRNPL. Interacts with the nucleosome remodeling and histone deacetylase/NuRD complex. Interacts with RBBP4; the interaction is direct and recruits RBBP4, a component of the NuRD complex, to telomeres.

It is found in the nucleus. The protein localises to the chromosome. The protein resides in the telomere. In terms of biological role, as part of a ribonucleoprotein complex composed at least of HNRNPK, HNRNPL and the circular RNA circZNF827 that nucleates the complex on chromatin, may negatively regulate the transcription of genes involved in neuronal differentiation. Could also recruit the nucleosome remodeling and histone deacetylase/NuRD complex to telomeric regions of chromosomes to regulate chromatin remodeling as part of telomere maintenance. This is Zinc finger protein 827 (Znf827) from Mus musculus (Mouse).